A 244-amino-acid chain; its full sequence is Putative nucleosome assembly protein C36B7.08c (244 aa).

Positions 199-244 (EAMTEEASDEDESVDLEEDEEEEDEEDEEGDEEKQEPPSKKSKKSN) are disordered. Over residues 201–232 (MTEEASDEDESVDLEEDEEEEDEEDEEGDEEK) the composition is skewed to acidic residues. Ser211 carries the post-translational modification Phosphoserine.

This sequence belongs to the nucleosome assembly protein (NAP) family.

Its subcellular location is the nucleus. This Schizosaccharomyces pombe (strain 972 / ATCC 24843) (Fission yeast) protein is Putative nucleosome assembly protein C36B7.08c.